The chain runs to 404 residues: Cytoplasmic 60S subunit biogenesis factor REI1 homolog 1 (404 aa).

2 C2H2-type zinc fingers span residues 4–28 (LTCN…SDWH) and 68–92 (YTCA…SRSH). Positions 119 to 169 (QHRGSIDDDSEDEWVEVDSDEELAAEEASDSLSKLNVNESGSAEDMDDDGD) are disordered. Composition is skewed to acidic residues over residues 125–147 (DDDS…EEAS) and 160–169 (SAEDMDDDGD). C2H2-type zinc fingers lie at residues 178–201 (TCCL…HKHH) and 229–256 (FMCL…AKSH).

It belongs to the REI1 family. As to quaternary structure, can form homodimer. Interacts with RLP24, RPL24A, RPL24B, EBP1 and JJJ1.

It is found in the cytoplasm. Pre-60S-associated factor involved in the cytoplasmic maturation of the 60S subunit. Involved in the dissociation and recycling of other late pre-60S factors before newly synthesized large ribosomal subunits enter translation. Can complement the growth defect of a yeast mutant lacking REI1. Required for leaf growth under cold temperature conditions. This Arabidopsis thaliana (Mouse-ear cress) protein is Cytoplasmic 60S subunit biogenesis factor REI1 homolog 1.